A 481-amino-acid chain; its full sequence is Flavonol 3-O-glucosyltransferase UGT71C1 (481 aa).

Catalysis depends on His-19, which acts as the Proton acceptor. His-19 is an an anthocyanidin binding site. The Charge relay role is filled by Asp-131. Positions 153, 352, 354, 369, 372, 373, 374, and 377 each coordinate UDP-alpha-D-glucose. Ala-392 provides a ligand contact to an anthocyanidin. Glu-393 and Gln-394 together coordinate UDP-alpha-D-glucose.

This sequence belongs to the UDP-glycosyltransferase family.

It catalyses the reaction a flavonol + UDP-alpha-D-glucose = a flavonol 3-O-beta-D-glucoside + UDP + H(+). It carries out the reaction a 7-O-hydroxy-flavonol + UDP-alpha-D-glucose = a flavonol 7-O-beta-D-glucoside + UDP + H(+). Its function is as follows. Possesses quercetin 7-O-glucosyltransferase and 3'-O-glucosyltransferase activities in vitro. Also active in vitro on benzoates and benzoate derivatives. Glucosylates other secondary metabolites in vitro like trans-resveratrol, curcumin, vanillin and etoposide. This Arabidopsis thaliana (Mouse-ear cress) protein is Flavonol 3-O-glucosyltransferase UGT71C1.